The chain runs to 214 residues: Corrinoid adenosyltransferase (214 aa).

50–56 serves as a coordination point for ATP; sequence GKGKGKS.

The protein belongs to the Cob(I)alamin adenosyltransferase family. Monomer. Mn(2+) serves as cofactor.

Its subcellular location is the cytoplasm. The enzyme catalyses 2 cob(II)yrinate a,c diamide + reduced [electron-transfer flavoprotein] + 2 ATP = 2 adenosylcob(III)yrinate a,c-diamide + 2 triphosphate + oxidized [electron-transfer flavoprotein] + 3 H(+). It carries out the reaction 2 cob(II)alamin + reduced [electron-transfer flavoprotein] + 2 ATP = 2 adenosylcob(III)alamin + 2 triphosphate + oxidized [electron-transfer flavoprotein] + 3 H(+). Its pathway is cofactor biosynthesis; adenosylcobalamin biosynthesis; adenosylcobalamin from cob(II)yrinate a,c-diamide: step 2/7. Functionally, required for both de novo synthesis of the corrin ring for the assimilation of exogenous corrinoids. Participates in the adenosylation of a variety of incomplete and complete corrinoids. This chain is Corrinoid adenosyltransferase (cobO), found in Sinorhizobium sp.